A 227-amino-acid polypeptide reads, in one-letter code: Floral homeotic protein DEFICIENS (227 aa).

The MADS-box domain maps to 3–57 (RGKIQIKRIENQTNRQVTYSKRRNGLFKKAHELSVLCDAKVSIIMISSTQKLHEY). The 91-residue stretch at 84–174 (YEKMQEHLKK…VLEFDARRED (91 aa)) folds into the K-box domain.

The protein resides in the nucleus. In terms of biological role, transcription factor involved in the genetic control of flower development. Acts in conjunction with GLOBOSA (glo). The polypeptide is Floral homeotic protein DEFICIENS (DEFA) (Antirrhinum majus (Garden snapdragon)).